Here is a 187-residue protein sequence, read N- to C-terminus: Elongation factor P (187 aa).

This sequence belongs to the elongation factor P family.

It localises to the cytoplasm. The protein operates within protein biosynthesis; polypeptide chain elongation. Involved in peptide bond synthesis. Stimulates efficient translation and peptide-bond synthesis on native or reconstituted 70S ribosomes in vitro. Probably functions indirectly by altering the affinity of the ribosome for aminoacyl-tRNA, thus increasing their reactivity as acceptors for peptidyl transferase. This Mycobacterium leprae (strain Br4923) protein is Elongation factor P.